The following is a 359-amino-acid chain: tRNA/tmRNA (uracil-C(5))-methyltransferase (359 aa).

S-adenosyl-L-methionine contacts are provided by Q183, Y211, N216, E232, and D292. Catalysis depends on C317, which acts as the Nucleophile. E351 serves as the catalytic Proton acceptor.

This sequence belongs to the class I-like SAM-binding methyltransferase superfamily. RNA M5U methyltransferase family. TrmA subfamily.

It catalyses the reaction uridine(54) in tRNA + S-adenosyl-L-methionine = 5-methyluridine(54) in tRNA + S-adenosyl-L-homocysteine + H(+). The catalysed reaction is uridine(341) in tmRNA + S-adenosyl-L-methionine = 5-methyluridine(341) in tmRNA + S-adenosyl-L-homocysteine + H(+). Dual-specificity methyltransferase that catalyzes the formation of 5-methyluridine at position 54 (m5U54) in all tRNAs, and that of position 341 (m5U341) in tmRNA (transfer-mRNA). The polypeptide is tRNA/tmRNA (uracil-C(5))-methyltransferase (Pseudomonas fluorescens (strain SBW25)).